A 78-amino-acid chain; its full sequence is Acyl carrier protein (78 aa).

One can recognise a Carrier domain in the interval 2–77 (SDVLERVSKI…DAVKFISEKV (76 aa)). Serine 37 is modified (O-(pantetheine 4'-phosphoryl)serine).

Belongs to the acyl carrier protein (ACP) family. In terms of processing, 4'-phosphopantetheine is transferred from CoA to a specific serine of apo-ACP by AcpS. This modification is essential for activity because fatty acids are bound in thioester linkage to the sulfhydryl of the prosthetic group.

It is found in the cytoplasm. Its pathway is lipid metabolism; fatty acid biosynthesis. In terms of biological role, carrier of the growing fatty acid chain in fatty acid biosynthesis. The protein is Acyl carrier protein of Maricaulis maris (strain MCS10) (Caulobacter maris).